Reading from the N-terminus, the 445-residue chain is T-box transcription factor TBX20 (445 aa).

Positions 108-287 form a DNA-binding region, T-box; sequence LWDKFHELGT…SNPFAKGFRD (180 aa). The segment at 318–337 is disordered; that stretch reads EEDVLGEESQTTQSRGSAFT. A compositionally biased stretch (polar residues) spans 325–337; sequence ESQTTQSRGSAFT.

Prominently expressed in the extraembryonic mesoderm, developing heart, eye analage and motor neurons of hindbrain and spinal cord. Expressed in extraembryonic tissues such as the amnion and allantois.

The protein resides in the nucleus. Its function is as follows. Acts as a transcriptional activator and repressor required for cardiac development and may have key roles in the maintenance of functional and structural phenotypes in adult heart. The chain is T-box transcription factor TBX20 (Tbx20) from Mus musculus (Mouse).